Consider the following 295-residue polypeptide: Trimeric intracellular cation channel type A (295 aa).

The Lumenal portion of the chain corresponds to 1 to 18 (MELLSALSLDDLAASFSK). Residues 19–39 (LPVFPLFDVAYYIISILYLKY) traverse the membrane as a helical segment. The Cytoplasmic segment spans residues 40–51 (EPGAVDLSKRSP). Residues 52-72 (VASWLCAMLYCFGSYILADVL) traverse the membrane as a helical segment. Residues 73-84 (LGESPIHYFSNN) lie on the Lumenal side of the membrane. Residue Gly74 participates in Ca(2+) binding. A helical transmembrane segment spans residues 85 to 105 (ANILLASAVWYLTFFCPLNIF). Residues 106–144 (YKIVSFLPVKLVLVGMKEVVRVRKIAMGIHHAHHHYHHG) are Cytoplasmic-facing. 2 residues coordinate a 1,2-diacyl-sn-glycero-3-phospho-(1D-myo-inositol-4,5-bisphosphate): Lys122 and Arg126. Residues 145–165 (WVIMVLIGWVKGSGVALMSNL) traverse the membrane as a helical segment. The Lumenal segment spans residues 166 to 178 (EQLLRGVWKPETN). A helical transmembrane segment spans residues 179 to 199 (EILHMSFPTKASLYGAILFTL). At 200-201 (QQ) the chain is on the cytoplasmic side. Residues 202-222 (AHWLPISKAYLIFFFTLFMAV) form a helical membrane-spanning segment. The Lumenal portion of the chain corresponds to 223–233 (CKIYMTATHSH). The chain crosses the membrane as a helical span at residues 234–254 (GSPFAIFESGICYVLFAAANG). The Cytoplasmic segment spans residues 255 to 295 (DHDDHGNHHHHHDDHDVSHSAGKSKEEHNEGTRKRKTKKAE). The interval 258–295 (DHGNHHHHHDDHDVSHSAGKSKEEHNEGTRKRKTKKAE) is disordered. Over residues 267–286 (DDHDVSHSAGKSKEEHNEGT) the composition is skewed to basic and acidic residues.

It belongs to the TMEM38 family. Homotrimer; conformation seems to be controled by binding to diacylglycerol (DAG).

Its subcellular location is the sarcoplasmic reticulum membrane. The protein localises to the nucleus membrane. It carries out the reaction K(+)(in) = K(+)(out). Its activity is regulated as follows. Channel activity is activated by a change of voltage within the sarcoplasmic reticulum lumen and blocked by luminal high Ca(2+) levels. Intracellular monovalent cation channel required for maintenance of rapid intracellular calcium release. Acts as a potassium counter-ion channel that functions in synchronization with calcium release from intracellular stores. Opened by a change of voltage within the sarcoplasmic reticulum lumen. This chain is Trimeric intracellular cation channel type A (tmem38a), found in Xenopus laevis (African clawed frog).